Reading from the N-terminus, the 213-residue chain is Probable RNA 2'-phosphotransferase (213 aa).

Belongs to the KptA/TPT1 family.

In terms of biological role, removes the 2'-phosphate from RNA via an intermediate in which the phosphate is ADP-ribosylated by NAD followed by a presumed transesterification to release the RNA and generate ADP-ribose 1''-2''-cyclic phosphate (APPR&gt;P). May function as an ADP-ribosylase. The polypeptide is Probable RNA 2'-phosphotransferase (Pyrobaculum aerophilum (strain ATCC 51768 / DSM 7523 / JCM 9630 / CIP 104966 / NBRC 100827 / IM2)).